Reading from the N-terminus, the 563-residue chain is Probable lysosomal cobalamin transporter (563 aa).

The next 5 membrane-spanning stretches (helical) occupy residues 8–28, 40–60, 95–115, 144–164, and 188–208; these read LIWF…SVFI, FVTF…MLLP, VIYY…IPFA, YTLA…FAPM, and AFTF…VFYT. N228 is a glycosylation site (N-linked (GlcNAc...) asparagine). 4 helical membrane passes run 314-334, 374-394, 416-436, and 506-526; these read GGFS…MTVI, IIFA…VVAV, MLLA…SVVM, and FGAL…VILV. A disordered region spans residues 537–563; sequence ERQLDEDAEEAEEESLLASTGRSGNPT. Over residues 539-551 the composition is skewed to acidic residues; it reads QLDEDAEEAEEES.

The protein belongs to the LIMR family. LMBRD1 subfamily.

It is found in the lysosome membrane. In terms of biological role, probable lysosomal cobalamin transporter. Required to export cobalamin from lysosomes allowing its conversion to cofactors. The sequence is that of Probable lysosomal cobalamin transporter from Neosartorya fischeri (strain ATCC 1020 / DSM 3700 / CBS 544.65 / FGSC A1164 / JCM 1740 / NRRL 181 / WB 181) (Aspergillus fischerianus).